The chain runs to 160 residues: Small ribosomal subunit protein uS9 (160 aa).

This sequence belongs to the universal ribosomal protein uS9 family.

The polypeptide is Small ribosomal subunit protein uS9 (Rhodopseudomonas palustris (strain ATCC BAA-98 / CGA009)).